A 229-amino-acid polypeptide reads, in one-letter code: Flagellar L-ring protein (229 aa).

The N-terminal stretch at 1 to 25 is a signal peptide; it reads MKQVRLPSSATVRAACAVAVAALAG. Residue cysteine 26 is the site of N-palmitoyl cysteine attachment. Cysteine 26 carries S-diacylglycerol cysteine lipidation.

The protein belongs to the FlgH family. As to quaternary structure, the basal body constitutes a major portion of the flagellar organelle and consists of four rings (L,P,S, and M) mounted on a central rod.

The protein localises to the cell outer membrane. The protein resides in the bacterial flagellum basal body. In terms of biological role, assembles around the rod to form the L-ring and probably protects the motor/basal body from shearing forces during rotation. This is Flagellar L-ring protein from Burkholderia cenocepacia (strain ATCC BAA-245 / DSM 16553 / LMG 16656 / NCTC 13227 / J2315 / CF5610) (Burkholderia cepacia (strain J2315)).